The primary structure comprises 702 residues: MVSMFSLFLLLIEQSPLVASLQQSQRHIVGVPWEKQHLYDSNEPDLTKWHCLNHEDIVLDISQINDGVCDCPDGSDEPGSAACVEDIFKSVAEGGGKVNKYFYCDNKGFIPRYIRKSEVADGICDCCDCSDELLSGYELFDAGSNCSQLKNEFDIMASKELSSYREGKEALEELERKYGTKEEAITRGNCLEEDKEKASAEIKVLSNRLSENRAKLEQLRGEYFNQLSHDPILYQFEQLNSTRLGSDILTSFTMVSRVSKGYQDIFKILSDLSEAYTPSLNDKVVNDNIKKFRKVRRRAEKAKINADSKIDDEQADNLYLYFTEEVPQIFLKRESENTLRYVIGKSNFVQALVEGKINYTNDILEYIREFRLIMDDISQNYNVNFQDAGVKSAVDSYKNYLGEYGELAELEPAHPSESLLRSLSEVTSFVNENAPKVLPPDAVESEQDTNSDHIGTSGDLRNKLKEILSKLNIFSSRKDLVSLEKRFRSCESQVSLLENELKQKMDYKKLLDETEDEGTNSTAGNLTELLELMGSQSYCLDDILDNYVYTICFQRPMTEGVIYQAEDKVDGKKVLIGRFKTSGFNVDLNMEKYAEHLKATYDEKSDLISNLAAIQDDDGNMQHYVFGNLNELNNGLVLEYENGDQCWNGPRRSATVFVRCSDKFKIRSVHEATKCNYIFDVVGPLGCNKTFEYEPPKFNLSE.

The N-terminal stretch at 1–20 (MVSMFSLFLLLIEQSPLVAS) is a signal peptide. N-linked (GlcNAc...) asparagine glycosylation is present at Asn145. Positions 163–228 (SYREGKEALE…LRGEYFNQLS (66 aa)) form a coiled coil. N-linked (GlcNAc...) asparagine glycans are attached at residues Asn240 and Asn358. Positions 435–457 (PKVLPPDAVESEQDTNSDHIGTS) are disordered. Residues 478–517 (KDLVSLEKRFRSCESQVSLLENELKQKMDYKKLLDETEDE) are a coiled coil. N-linked (GlcNAc...) asparagine glycans are attached at residues Asn520 and Asn525. Residues 537 to 689 (SYCLDDILDN…DVVGPLGCNK (153 aa)) form the MRH domain. Intrachain disulfides connect Cys539/Cys552, Cys646/Cys675, and Cys660/Cys687. Residues Asn688 and Asn699 are each glycosylated (N-linked (GlcNAc...) asparagine).

In terms of assembly, heterodimer of a catalytic subunit alpha (ROT2) and a subunit beta (GTB1).

It is found in the endoplasmic reticulum. Its function is as follows. Subunit of glucosidase 2, which cleaves sequentially the 2 innermost alpha-1,3-linked glucose residues from the Glc(2)Man(9)GlcNAc(2) oligosaccharide precursor of immature glycoproteins. Specifically required for the cleavage of the final glucose. The chain is Glucosidase 2 subunit beta (GTB1) from Saccharomyces cerevisiae (strain ATCC 204508 / S288c) (Baker's yeast).